A 120-amino-acid polypeptide reads, in one-letter code: uncharacterized protein (120 aa).

The chain crosses the membrane as a helical span at residues serine 40–tryptophan 62.

It localises to the membrane. This is an uncharacterized protein from Saccharomyces cerevisiae (strain ATCC 204508 / S288c) (Baker's yeast).